A 98-amino-acid polypeptide reads, in one-letter code: Large ribosomal subunit protein uL23 (98 aa).

This sequence belongs to the universal ribosomal protein uL23 family. As to quaternary structure, part of the 50S ribosomal subunit. Contacts protein L29, and trigger factor when it is bound to the ribosome.

Functionally, one of the early assembly proteins it binds 23S rRNA. One of the proteins that surrounds the polypeptide exit tunnel on the outside of the ribosome. Forms the main docking site for trigger factor binding to the ribosome. The polypeptide is Large ribosomal subunit protein uL23 (Alcanivorax borkumensis (strain ATCC 700651 / DSM 11573 / NCIMB 13689 / SK2)).